The sequence spans 522 residues: Acetylcholine receptor subunit delta (522 aa).

The signal sequence occupies residues 1–21 (MGNIHFVYLLISCLYYSGCSG). Over 22–245 (VNEEERLIND…VTFYLIIRRK (224 aa)) the chain is Extracellular. N-linked (GlcNAc...) asparagine glycans are attached at residues Asn-91, Asn-164, and Asn-229. Cys-151 and Cys-165 form a disulfide bridge. 3 consecutive transmembrane segments (helical) span residues 246 to 270 (PLFY…AFYL), 278 to 295 (MSTA…LLLT), and 312 to 333 (YLMF…VLNF). At 334-476 (HFRTPSTHVL…WNLVGQTIDR (143 aa)) the chain is on the cytoplasmic side. Tyr-393 carries the phosphotyrosine; by Tyr-kinases modification. Residues 477 to 497 (LSMFIITPVMVLGTIFIFVMG) form a helical membrane-spanning segment.

It belongs to the ligand-gated ion channel (TC 1.A.9) family. Acetylcholine receptor (TC 1.A.9.1) subfamily. Pentamer of two alpha chains, and one each of the beta, delta, and gamma chains.

The protein localises to the postsynaptic cell membrane. Its subcellular location is the cell membrane. The enzyme catalyses K(+)(in) = K(+)(out). It catalyses the reaction Na(+)(in) = Na(+)(out). In terms of biological role, after binding acetylcholine, the AChR responds by an extensive change in conformation that affects all subunits and leads to opening of an ion-conducting channel across the plasma membrane. This chain is Acetylcholine receptor subunit delta (chrnd), found in Tetronarce californica (Pacific electric ray).